The sequence spans 671 residues: cGMP-dependent protein kinase 1 (671 aa).

S2 is subject to N-acetylserine. Residues 2–59 (SELEEDFAKILMLKEERIKELEKRLSEKEEEIQELKRKLHKCQSVLPVPSTHIGPRTT) are a coiled coil. The interval 2 to 102 (SELEEDFAKI…LIKEAILDND (101 aa)) is required for dimerization. The leucine-zipper stretch occupies residues 9–44 (AKILMLKEERIKELEKRLSEKEEEIQELKRKLHKCQ). Residues 50 to 75 (PSTHIGPRTTRAQGISAEPQTYRSFH) are autoinhibitory domain. A Phosphothreonine; by autocatalysis modification is found at T59. The interval 103–220 (FMKNLELSQI…EYMEFLKSVP (118 aa)) is cGMP-binding, high affinity. 3',5'-cyclic GMP-binding positions include 167-170 (GELA), 177-178 (RT), R282, 291-294 (GEKA), 301-302 (RT), and Y336. A cGMP-binding, low affinity region spans residues 221-341 (TFQSLPDEIL…SNKAYEDAEA (121 aa)). The Protein kinase domain maps to 360–619 (FNIIDTLGVG…VKDIQKHKWF (260 aa)). ATP contacts are provided by residues 366–374 (LGVGGFGRV) and K390. The active-site Proton acceptor is D484. T515 bears the Phosphothreonine mark. In terms of domain architecture, AGC-kinase C-terminal spans 620 to 671 (EGFNWEGLRKGTLTPPIIPSVASPTDTSNFDSFPEDSDEPPPDDNSGWDIDF). Positions 635–671 (PIIPSVASPTDTSNFDSFPEDSDEPPPDDNSGWDIDF) are disordered. The span at 652 to 661 (FPEDSDEPPP) shows a compositional bias: acidic residues.

It belongs to the protein kinase superfamily. AGC Ser/Thr protein kinase family. cGMP subfamily. As to quaternary structure, isoform alpha: parallel homodimer or heterodimer and also heterotetramer. Interacts directly with PPP1R12A. Non-covalent dimer of dimer of PRKG1-PRKG1 and PPP1R12A-PPP1R12A. This interaction targets PRKG1 to stress fibers to mediate smooth muscle cell relaxation and vasodilation in responses to rises in cGMP. Isoform beta: antiparallel homodimer. Part of cGMP kinase signaling complex at least composed of ACTA2/alpha-actin, CNN1/calponin H1, PLN/phospholamban, PRKG1 and ITPR1. Interacts with IRAG1. Forms a stable complex with ITPR1, IRAG1, and isoform beta of PRKG1. Interacts with TRPC7 (via ankyrin repeat domain). Isoform alpha interacts with RGS2. Interacts with GTF2I. In terms of processing, autophosphorylation increases kinase activity. Post-translationally, 65 kDa monomer is produced by proteolytic cleavage. As to expression, detected in cerebellum, hippocampus, dorsomedial hypothalamus, medulla, subcommissural organ, cerebral cortex, amygdala, habenulae, various hypothalamic regions, olfactory bulb, pituitary gland, and retina. Isoform alpha is prominent in the cerebellum and medulla, whereas isoform Beta is predominant in the cortex, hippocampus, hypothalamus, and olfactory bulb.

The protein localises to the cytoplasm. It carries out the reaction L-seryl-[protein] + ATP = O-phospho-L-seryl-[protein] + ADP + H(+). It catalyses the reaction L-threonyl-[protein] + ATP = O-phospho-L-threonyl-[protein] + ADP + H(+). Its activity is regulated as follows. In the absence of cGMP, PRKG1 activity is suppressed by autoinhibitory contacts. Its function is as follows. Serine/threonine protein kinase that acts as a key mediator of the nitric oxide (NO)/cGMP signaling pathway. GMP binding activates PRKG1, which phosphorylates serines and threonines on many cellular proteins. Numerous protein targets for PRKG1 phosphorylation are implicated in modulating cellular calcium, but the contribution of each of these targets may vary substantially among cell types. Proteins that are phosphorylated by PRKG1 regulate platelet activation and adhesion, smooth muscle contraction, cardiac function, gene expression, feedback of the NO-signaling pathway, and other processes involved in several aspects of the CNS like axon guidance, hippocampal and cerebellar learning, circadian rhythm and nociception. Smooth muscle relaxation is mediated through lowering of intracellular free calcium, by desensitization of contractile proteins to calcium, and by decrease in the contractile state of smooth muscle or in platelet activation. Regulates intracellular calcium levels via several pathways: phosphorylates IRAG1 and inhibits IP3-induced Ca(2+) release from intracellular stores, phosphorylation of KCNMA1 (BKCa) channels decreases intracellular Ca(2+) levels, which leads to increased opening of this channel. PRKG1 phosphorylates the canonical transient receptor potential channel (TRPC) family which inactivates the associated inward calcium current. Another mode of action of NO/cGMP/PKGI signaling involves PKGI-mediated inactivation of the Ras homolog gene family member A (RhoA). Phosphorylation of RHOA by PRKG1 blocks the action of this protein in myriad processes: regulation of RHOA translocation; decreasing contraction; controlling vesicle trafficking, reduction of myosin light chain phosphorylation resulting in vasorelaxation. Activation of PRKG1 by NO signaling also alters gene expression in a number of tissues. In smooth muscle cells, increased cGMP and PRKG1 activity influence expression of smooth muscle-specific contractile proteins, levels of proteins in the NO/cGMP signaling pathway, down-regulation of the matrix proteins osteopontin and thrombospondin-1 to limit smooth muscle cell migration and phenotype. Regulates vasodilator-stimulated phosphoprotein (VASP) functions in platelets and smooth muscle. The polypeptide is cGMP-dependent protein kinase 1 (Prkg1) (Mus musculus (Mouse)).